Consider the following 200-residue polypeptide: Small ribosomal subunit protein uS4c (200 aa).

The region spanning 88–148 is the S4 RNA-binding domain; it reads IRLDNTIFNL…PKSYYIFKLC (61 aa).

This sequence belongs to the universal ribosomal protein uS4 family. As to quaternary structure, part of the 30S ribosomal subunit.

The protein localises to the plastid. Its subcellular location is the apicoplast. Its function is as follows. One of the primary rRNA binding proteins, it binds directly to 16S rRNA where it nucleates assembly of the body of the 30S subunit. The sequence is that of Small ribosomal subunit protein uS4c (rps4) from Eimeria tenella (Coccidian parasite).